Reading from the N-terminus, the 328-residue chain is Mannitol-1-phosphate 5-dehydrogenase (328 aa).

Leucine 3–glycine 14 serves as a coordination point for NAD(+).

This sequence belongs to the mannitol dehydrogenase family.

It carries out the reaction D-mannitol 1-phosphate + NAD(+) = beta-D-fructose 6-phosphate + NADH + H(+). The protein is Mannitol-1-phosphate 5-dehydrogenase (mtlD) of Mycoplasma mycoides subsp. mycoides SC (strain CCUG 32753 / NCTC 10114 / PG1).